A 415-amino-acid polypeptide reads, in one-letter code: D-galactonate dehydratase family member RspA (415 aa).

2 residues coordinate substrate: asparagine 48 and histidine 133. Tyrosine 170 acts as the Proton donor/acceptor in catalysis. Aspartate 223 serves as a coordination point for Mg(2+). Histidine 225 (proton donor/acceptor) is an active-site residue. Residues glutamate 249, aspartate 250, and glutamate 275 each contribute to the Mg(2+) site. Substrate is bound by residues glutamate 275, arginine 296, histidine 325, aspartate 329, and glutamate 352.

This sequence belongs to the mandelate racemase/muconate lactonizing enzyme family. GalD subfamily. Mg(2+) is required as a cofactor.

It carries out the reaction D-mannonate = 2-dehydro-3-deoxy-D-gluconate + H2O. In terms of biological role, has low D-mannonate dehydratase activity (in vitro), suggesting that this is not a physiological substrate and that it has no significant role in D-mannonate degradation in vivo. Has no detectable activity with a panel of 70 other acid sugars (in vitro). In Escherichia coli O6:H1 (strain CFT073 / ATCC 700928 / UPEC), this protein is D-galactonate dehydratase family member RspA (rspA).